Here is a 172-residue protein sequence, read N- to C-terminus: Adenine phosphoribosyltransferase (172 aa).

The protein belongs to the purine/pyrimidine phosphoribosyltransferase family. In terms of assembly, homodimer.

Its subcellular location is the cytoplasm. It catalyses the reaction AMP + diphosphate = 5-phospho-alpha-D-ribose 1-diphosphate + adenine. Its pathway is purine metabolism; AMP biosynthesis via salvage pathway; AMP from adenine: step 1/1. Functionally, catalyzes a salvage reaction resulting in the formation of AMP, that is energically less costly than de novo synthesis. This is Adenine phosphoribosyltransferase from Levilactobacillus brevis (strain ATCC 367 / BCRC 12310 / CIP 105137 / JCM 1170 / LMG 11437 / NCIMB 947 / NCTC 947) (Lactobacillus brevis).